The chain runs to 445 residues: Phosphoglucosamine mutase (445 aa).

Residue Ser104 is the Phosphoserine intermediate of the active site. Mg(2+) is bound by residues Ser104, Asp243, Asp245, and Asp247. Ser104 is modified (phosphoserine).

This sequence belongs to the phosphohexose mutase family. Mg(2+) serves as cofactor. Activated by phosphorylation.

The catalysed reaction is alpha-D-glucosamine 1-phosphate = D-glucosamine 6-phosphate. Catalyzes the conversion of glucosamine-6-phosphate to glucosamine-1-phosphate. The polypeptide is Phosphoglucosamine mutase (Neisseria subflava).